A 407-amino-acid chain; its full sequence is Argininosuccinate synthase (407 aa).

ATP-binding positions include 13 to 21 (AYSGGLDTS) and Ala40. Tyr91 and Ser96 together coordinate L-citrulline. Residue Gly121 participates in ATP binding. Positions 123, 127, and 128 each coordinate L-aspartate. L-citrulline is bound at residue Asn127. L-citrulline-binding residues include Arg131, Ser182, Ser191, Glu267, and Tyr279.

The protein belongs to the argininosuccinate synthase family. Type 1 subfamily. Homotetramer.

Its subcellular location is the cytoplasm. The catalysed reaction is L-citrulline + L-aspartate + ATP = 2-(N(omega)-L-arginino)succinate + AMP + diphosphate + H(+). It participates in amino-acid biosynthesis; L-arginine biosynthesis; L-arginine from L-ornithine and carbamoyl phosphate: step 2/3. The chain is Argininosuccinate synthase from Mesorhizobium japonicum (strain LMG 29417 / CECT 9101 / MAFF 303099) (Mesorhizobium loti (strain MAFF 303099)).